We begin with the raw amino-acid sequence, 87 residues long: Small ribosomal subunit protein uS15c (87 aa).

The segment at M1 to P20 is disordered.

The protein belongs to the universal ribosomal protein uS15 family. Part of the 30S ribosomal subunit.

It is found in the plastid. It localises to the chloroplast. In Zygnema circumcarinatum (Green alga), this protein is Small ribosomal subunit protein uS15c (rps15).